Here is a 165-residue protein sequence, read N- to C-terminus: PTS system glucose-specific EIIA component (165 aa).

Residues 34 to 138 (DPVFAQKMMG…SSITPIIISN (105 aa)) form the PTS EIIA type-1 domain. Residues H71 and H86 each coordinate Zn(2+). The active-site Tele-phosphohistidine intermediate; for EIIA activity is the H86. A Phosphohistidine; by HPr modification is found at H86.

As to quaternary structure, heterodimer with glycerol kinase (glpk). The cofactor is Zn(2+).

The protein localises to the cytoplasm. In terms of biological role, the phosphoenolpyruvate-dependent sugar phosphotransferase system (sugar PTS), a major carbohydrate active transport system, catalyzes the phosphorylation of incoming sugar substrates concomitantly with their translocation across the cell membrane. The enzyme II complex composed of PtsG and Crr is involved in glucose transport. This chain is PTS system glucose-specific EIIA component (crr), found in Oceanobacillus iheyensis (strain DSM 14371 / CIP 107618 / JCM 11309 / KCTC 3954 / HTE831).